We begin with the raw amino-acid sequence, 118 residues long: Ribosome-binding factor A (118 aa).

The protein belongs to the RbfA family. Monomer. Binds 30S ribosomal subunits, but not 50S ribosomal subunits or 70S ribosomes.

The protein localises to the cytoplasm. In terms of biological role, one of several proteins that assist in the late maturation steps of the functional core of the 30S ribosomal subunit. Associates with free 30S ribosomal subunits (but not with 30S subunits that are part of 70S ribosomes or polysomes). Required for efficient processing of 16S rRNA. May interact with the 5'-terminal helix region of 16S rRNA. In Bacillus cereus (strain AH187), this protein is Ribosome-binding factor A.